The following is a 157-amino-acid chain: 2-C-methyl-D-erythritol 2,4-cyclodiphosphate synthase (157 aa).

2 residues coordinate a divalent metal cation: aspartate 8 and histidine 10. Residues 8 to 10 (DVH) and 34 to 35 (HS) each bind 4-CDP-2-C-methyl-D-erythritol 2-phosphate. Histidine 42 is an a divalent metal cation binding site. 4-CDP-2-C-methyl-D-erythritol 2-phosphate-binding positions include 56–58 (DIG), 61–65 (FPDTD), 100–106 (AQAPKMA), 132–135 (TTTE), phenylalanine 139, and arginine 142.

This sequence belongs to the IspF family. Homotrimer. A divalent metal cation is required as a cofactor.

The enzyme catalyses 4-CDP-2-C-methyl-D-erythritol 2-phosphate = 2-C-methyl-D-erythritol 2,4-cyclic diphosphate + CMP. It functions in the pathway isoprenoid biosynthesis; isopentenyl diphosphate biosynthesis via DXP pathway; isopentenyl diphosphate from 1-deoxy-D-xylulose 5-phosphate: step 4/6. Its function is as follows. Involved in the biosynthesis of isopentenyl diphosphate (IPP) and dimethylallyl diphosphate (DMAPP), two major building blocks of isoprenoid compounds. Catalyzes the conversion of 4-diphosphocytidyl-2-C-methyl-D-erythritol 2-phosphate (CDP-ME2P) to 2-C-methyl-D-erythritol 2,4-cyclodiphosphate (ME-CPP) with a corresponding release of cytidine 5-monophosphate (CMP). This Pseudomonas putida (strain ATCC 700007 / DSM 6899 / JCM 31910 / BCRC 17059 / LMG 24140 / F1) protein is 2-C-methyl-D-erythritol 2,4-cyclodiphosphate synthase.